The chain runs to 364 residues: tRNA 2-selenouridine synthase (364 aa).

The 124-residue stretch at 14-137 folds into the Rhodanese domain; sequence LLADTPLIDV…LRQTAIQATW (124 aa). Cysteine 97 (S-selanylcysteine intermediate) is an active-site residue.

This sequence belongs to the SelU family. As to quaternary structure, monomer.

It catalyses the reaction 5-methylaminomethyl-2-thiouridine(34) in tRNA + selenophosphate + (2E)-geranyl diphosphate + H2O + H(+) = 5-methylaminomethyl-2-selenouridine(34) in tRNA + (2E)-thiogeraniol + phosphate + diphosphate. The catalysed reaction is 5-methylaminomethyl-2-thiouridine(34) in tRNA + (2E)-geranyl diphosphate = 5-methylaminomethyl-S-(2E)-geranyl-thiouridine(34) in tRNA + diphosphate. The enzyme catalyses 5-methylaminomethyl-S-(2E)-geranyl-thiouridine(34) in tRNA + selenophosphate + H(+) = 5-methylaminomethyl-2-(Se-phospho)selenouridine(34) in tRNA + (2E)-thiogeraniol. It carries out the reaction 5-methylaminomethyl-2-(Se-phospho)selenouridine(34) in tRNA + H2O = 5-methylaminomethyl-2-selenouridine(34) in tRNA + phosphate. Involved in the post-transcriptional modification of the uridine at the wobble position (U34) of tRNA(Lys), tRNA(Glu) and tRNA(Gln). Catalyzes the conversion of 2-thiouridine (S2U-RNA) to 2-selenouridine (Se2U-RNA). Acts in a two-step process involving geranylation of 2-thiouridine (S2U) to S-geranyl-2-thiouridine (geS2U) and subsequent selenation of the latter derivative to 2-selenouridine (Se2U) in the tRNA chain. This Salmonella heidelberg (strain SL476) protein is tRNA 2-selenouridine synthase.